A 335-amino-acid chain; its full sequence is N-acetyl-gamma-glutamyl-phosphate reductase (335 aa).

The active site involves C147.

This sequence belongs to the NAGSA dehydrogenase family. Type 1 subfamily.

It is found in the cytoplasm. The catalysed reaction is N-acetyl-L-glutamate 5-semialdehyde + phosphate + NADP(+) = N-acetyl-L-glutamyl 5-phosphate + NADPH + H(+). It functions in the pathway amino-acid biosynthesis; L-arginine biosynthesis; N(2)-acetyl-L-ornithine from L-glutamate: step 3/4. Functionally, catalyzes the NADPH-dependent reduction of N-acetyl-5-glutamyl phosphate to yield N-acetyl-L-glutamate 5-semialdehyde. This is N-acetyl-gamma-glutamyl-phosphate reductase from Campylobacter hominis (strain ATCC BAA-381 / DSM 21671 / CCUG 45161 / LMG 19568 / NCTC 13146 / CH001A).